Reading from the N-terminus, the 930-residue chain is Translation initiation factor IF-2 (930 aa).

The segment covering 50-67 (FKPAAAPKVEAKPAAPKV) has biased composition (low complexity). Disordered stretches follow at residues 50-217 (FKPA…SSEE) and 260-346 (EVVP…HELP). 2 stretches are compositionally biased toward basic and acidic residues: residues 68-90 (SAEK…EAKP) and 110-125 (FKAE…AERR). The span at 129 to 141 (KGNNRDQQQNGNR) shows a compositional bias: low complexity. Basic and acidic residues-rich tracts occupy residues 157–167 (RDNRRFNDQAK) and 262–295 (VPEK…DGPR). Over residues 309-318 (NQKNSNWNNN) the composition is skewed to low complexity. Over residues 337-346 (VTERKFHELP) the composition is skewed to basic and acidic residues. Residues 432–599 (ERPPVVTIMG…TVLLVAEIQE (168 aa)) form the tr-type G domain. The interval 441–448 (GHVDHGKT) is G1. 441-448 (GHVDHGKT) serves as a coordination point for GTP. The segment at 466–470 (GITQH) is G2. Residues 487–490 (DTPG) form a G3 region. GTP-binding positions include 487-491 (DTPGH) and 541-544 (NKID). The tract at residues 541-544 (NKID) is G4. The segment at 577-579 (SAK) is G5.

The protein belongs to the TRAFAC class translation factor GTPase superfamily. Classic translation factor GTPase family. IF-2 subfamily.

It is found in the cytoplasm. Its function is as follows. One of the essential components for the initiation of protein synthesis. Protects formylmethionyl-tRNA from spontaneous hydrolysis and promotes its binding to the 30S ribosomal subunits. Also involved in the hydrolysis of GTP during the formation of the 70S ribosomal complex. This chain is Translation initiation factor IF-2, found in Streptococcus pneumoniae (strain Taiwan19F-14).